Here is a 156-residue protein sequence, read N- to C-terminus: N-glycosidase Npun_R5314 (156 aa).

This sequence belongs to the YbiA family.

It carries out the reaction 2,5-diamino-6-hydroxy-4-(5-phosphoribosylamino)-pyrimidine + H2O = 2,5,6-triamino-4-hydroxypyrimidine + D-ribose 5-phosphate. The catalysed reaction is 5-amino-6-(5-phospho-D-ribosylamino)uracil + H2O = 5,6-diaminouracil + D-ribose 5-phosphate. Its function is as follows. Catalyzes the hydrolysis of the N-glycosidic bond in the first two intermediates of riboflavin biosynthesis, which are highly reactive metabolites, yielding relatively innocuous products. Thus, can divert a surplus of harmful intermediates into relatively harmless products and pre-empt the damage these intermediates would otherwise do. May act on other substrates in vivo. Has no activity against GTP, nucleoside monophosphates or ADP-ribose. The protein is N-glycosidase Npun_R5314 of Nostoc punctiforme (strain ATCC 29133 / PCC 73102).